The chain runs to 378 residues: Protein RecA (378 aa).

66-73 (GPESSGKT) contacts ATP. A disordered region spans residues 333 to 378 (PDAAKAEAATDAAAAADTAGTDDAAKSVPAPASKTAKATKATAVKS). The span at 338–378 (AEAATDAAAAADTAGTDDAAKSVPAPASKTAKATKATAVKS) shows a compositional bias: low complexity.

The protein belongs to the RecA family.

It is found in the cytoplasm. In terms of biological role, can catalyze the hydrolysis of ATP in the presence of single-stranded DNA, the ATP-dependent uptake of single-stranded DNA by duplex DNA, and the ATP-dependent hybridization of homologous single-stranded DNAs. It interacts with LexA causing its activation and leading to its autocatalytic cleavage. This Streptomyces venezuelae (strain ATCC 10712 / CBS 650.69 / DSM 40230 / JCM 4526 / NBRC 13096 / PD 04745) protein is Protein RecA.